The primary structure comprises 1378 residues: DNA-directed RNA polymerase subunit beta (1378 aa).

It belongs to the RNA polymerase beta chain family. As to quaternary structure, the RNAP catalytic core consists of 2 alpha, 1 beta, 1 beta' and 1 omega subunit. When a sigma factor is associated with the core the holoenzyme is formed, which can initiate transcription.

It carries out the reaction RNA(n) + a ribonucleoside 5'-triphosphate = RNA(n+1) + diphosphate. Its function is as follows. DNA-dependent RNA polymerase catalyzes the transcription of DNA into RNA using the four ribonucleoside triphosphates as substrates. In Roseobacter denitrificans (strain ATCC 33942 / OCh 114) (Erythrobacter sp. (strain OCh 114)), this protein is DNA-directed RNA polymerase subunit beta.